The following is a 179-amino-acid chain: ATP synthase subunit delta (179 aa).

The protein belongs to the ATPase delta chain family. As to quaternary structure, F-type ATPases have 2 components, F(1) - the catalytic core - and F(0) - the membrane proton channel. F(1) has five subunits: alpha(3), beta(3), gamma(1), delta(1), epsilon(1). F(0) has three main subunits: a(1), b(2) and c(10-14). The alpha and beta chains form an alternating ring which encloses part of the gamma chain. F(1) is attached to F(0) by a central stalk formed by the gamma and epsilon chains, while a peripheral stalk is formed by the delta and b chains.

It localises to the cell membrane. Functionally, f(1)F(0) ATP synthase produces ATP from ADP in the presence of a proton or sodium gradient. F-type ATPases consist of two structural domains, F(1) containing the extramembraneous catalytic core and F(0) containing the membrane proton channel, linked together by a central stalk and a peripheral stalk. During catalysis, ATP synthesis in the catalytic domain of F(1) is coupled via a rotary mechanism of the central stalk subunits to proton translocation. This protein is part of the stalk that links CF(0) to CF(1). It either transmits conformational changes from CF(0) to CF(1) or is implicated in proton conduction. The protein is ATP synthase subunit delta of Rubrobacter xylanophilus (strain DSM 9941 / JCM 11954 / NBRC 16129 / PRD-1).